Consider the following 508-residue polypeptide: NADH-quinone oxidoreductase subunit N 2 (508 aa).

14 helical membrane-spanning segments follow: residues 14–34, 43–63, 90–110, 119–139, 144–164, 179–199, 223–243, 275–295, 298–318, 327–347, 353–373, 400–420, 433–455, and 473–493; these read SYVAILPHLIVTATLLVVIVL, SLVWVTLGGVVLAMLSIWYTA, FTFFMNGVLLGIAALVILLSA, GAHMEFYEIILAVTLGMMFMV, LLTIYIGLELTSISSYVLAGI, FLTGATASAVLLFGLSLIYGV, GPALTPLLVAGMAFLMVGFGF, GAAMAAILRVFVGGLGVAPFT, WALIWALAAAASMTVGNLVAL, MAYSSIAQAGYILVGVAASGL, ISSVLFYVMAYAVTNLGIFAV, AWALLLFFVSLIGIPPTVGFL, GYLWLAVLMAVNSVISVGYYYRV, and TGISATVLLSLLGVVALTIFA.

Belongs to the complex I subunit 2 family. In terms of assembly, NDH-1 is composed of 14 different subunits. Subunits NuoA, H, J, K, L, M, N constitute the membrane sector of the complex.

It localises to the cell membrane. The enzyme catalyses a quinone + NADH + 5 H(+)(in) = a quinol + NAD(+) + 4 H(+)(out). Functionally, NDH-1 shuttles electrons from NADH, via FMN and iron-sulfur (Fe-S) centers, to quinones in the respiratory chain. The immediate electron acceptor for the enzyme in this species is believed to be a menaquinone. Couples the redox reaction to proton translocation (for every two electrons transferred, four hydrogen ions are translocated across the cytoplasmic membrane), and thus conserves the redox energy in a proton gradient. The sequence is that of NADH-quinone oxidoreductase subunit N 2 from Symbiobacterium thermophilum (strain DSM 24528 / JCM 14929 / IAM 14863 / T).